Reading from the N-terminus, the 199-residue chain is ATP-dependent Clp protease proteolytic subunit (199 aa).

Catalysis depends on Ser-97, which acts as the Nucleophile. The active site involves His-122.

This sequence belongs to the peptidase S14 family. As to quaternary structure, fourteen ClpP subunits assemble into 2 heptameric rings which stack back to back to give a disk-like structure with a central cavity, resembling the structure of eukaryotic proteasomes.

The protein localises to the cytoplasm. It carries out the reaction Hydrolysis of proteins to small peptides in the presence of ATP and magnesium. alpha-casein is the usual test substrate. In the absence of ATP, only oligopeptides shorter than five residues are hydrolyzed (such as succinyl-Leu-Tyr-|-NHMec, and Leu-Tyr-Leu-|-Tyr-Trp, in which cleavage of the -Tyr-|-Leu- and -Tyr-|-Trp bonds also occurs).. Cleaves peptides in various proteins in a process that requires ATP hydrolysis. Has a chymotrypsin-like activity. Plays a major role in the degradation of misfolded proteins. This is ATP-dependent Clp protease proteolytic subunit from Geotalea daltonii (strain DSM 22248 / JCM 15807 / FRC-32) (Geobacter daltonii).